Consider the following 214-residue polypeptide: Clavatol biosynthesis cluster protein B (214 aa).

Positions 1–17 are cleaved as a signal peptide; that stretch reads MAALSFQCLCVASAVRA. N-linked (GlcNAc...) asparagine glycans are attached at residues Asn103 and Asn204.

The protein operates within secondary metabolite biosynthesis. Part of the cla gene cluster that produces clavatol and ortho-quinone methide. The clavatol biosynthesis cluster cla and the terrestric acid cluster tra are both involved in the production of peniphenones and penilactones. The non-reducing PKS claF is responsible for the formation of clavatol from successive condensations of 3 malonyl-CoA units, presumably with a simple acetyl-CoA starter unit, and 2 methylation steps. The esterase claE probably collaborates with claF by catalyzing the hydrolysis of ACP-bound acyl intermediates to free the ACP from stalled intermediates. The clavatol oxidase claD then converts clavatol to hydroxyclavatol. Spontaneous dehydration of hydroxyclavatol leads to the accumulation of the highly active ortho-quinone methide. On the other hand, the PKS-NRPS hybrid traA is involved in the formation of crustosic acid, with the help of traB and traD. The polyketide synthase module (PKS) of traA is responsible for the synthesis of the polyketide backbone via the condensation of an acetyl-CoA starter unit with 3 malonyl-CoA units. The downstream nonribosomal peptide synthetase (NRPS) module then amidates the carboxyl end of the polyketide with L-malic acid. Because traA lacks a designated enoylreductase (ER) domain, the required activity is provided the enoyl reductase traG. Crustosic acid undergoes decarboxylation and isomerization to the terrestric acid, catalyzed by the 2-oxoglutarate-dependent dioxygenase traH. Both acids are further converted to the 2 gamma-butyrolactones (R)-5-methyltetronic acid and (S)-5-carboxylmethyltetronic acid, with involvement of the cytochrome P450 monooxygenase claJ. Spontaneous addition of the methide to these gamma-butyrolactones leads to peniphenone D and penilactone D, which undergo again stereospecific attacking by methide to give penilactones A and B. The function of claB has not been investigated yet. The polypeptide is Clavatol biosynthesis cluster protein B (Penicillium crustosum (Blue mold fungus)).